Here is a 78-residue protein sequence, read N- to C-terminus: Large ribosomal subunit protein bL28 (78 aa).

Positions 1–20 (MSRVCQVTGKRPVTGNNRSH) are disordered.

The protein belongs to the bacterial ribosomal protein bL28 family.

The polypeptide is Large ribosomal subunit protein bL28 (Vibrio campbellii (strain ATCC BAA-1116)).